Here is a 511-residue protein sequence, read N- to C-terminus: Maturase K (511 aa).

The protein belongs to the intron maturase 2 family. MatK subfamily.

It localises to the plastid. Its subcellular location is the chloroplast. Functionally, usually encoded in the trnK tRNA gene intron. Probably assists in splicing its own and other chloroplast group II introns. This Hordeum vulgare (Barley) protein is Maturase K.